Consider the following 831-residue polypeptide: Probable DNA-directed RNA polymerase (831 aa).

Catalysis depends on residues Asp-490, Lys-560, and Asp-738.

Belongs to the phage and mitochondrial RNA polymerase family.

The protein localises to the mitochondrion. The catalysed reaction is RNA(n) + a ribonucleoside 5'-triphosphate = RNA(n+1) + diphosphate. In terms of biological role, DNA-dependent RNA polymerase catalyzes the transcription of DNA into RNA using the four ribonucleoside triphosphates as substrates. The sequence is that of Probable DNA-directed RNA polymerase from Gelasinospora sp. (strain G114).